The chain runs to 365 residues: Carbamoyl phosphate synthase small chain (365 aa).

2 CPSase regions span residues 1–166 (MKRQ…PSPG) and 1–169 (MKRQ…GRGH). L-glutamine-binding residues include S45, G218, and G220. The Glutamine amidotransferase type-1 domain occupies 170-357 (RVVLVDFGMK…LTMIENFKKE (188 aa)). The active-site Nucleophile is C245. L-glutamine is bound by residues L246, Q249, N287, G289, and Y290. Active-site residues include H330 and E332.

This sequence belongs to the CarA family. As to quaternary structure, composed of two chains; the small (or glutamine) chain promotes the hydrolysis of glutamine to ammonia, which is used by the large (or ammonia) chain to synthesize carbamoyl phosphate. Tetramer of heterodimers (alpha,beta)4.

It catalyses the reaction hydrogencarbonate + L-glutamine + 2 ATP + H2O = carbamoyl phosphate + L-glutamate + 2 ADP + phosphate + 2 H(+). It carries out the reaction L-glutamine + H2O = L-glutamate + NH4(+). It participates in amino-acid biosynthesis; L-arginine biosynthesis; carbamoyl phosphate from bicarbonate: step 1/1. Its pathway is pyrimidine metabolism; UMP biosynthesis via de novo pathway; (S)-dihydroorotate from bicarbonate: step 1/3. Functionally, small subunit of the glutamine-dependent carbamoyl phosphate synthetase (CPSase). CPSase catalyzes the formation of carbamoyl phosphate from the ammonia moiety of glutamine, carbonate, and phosphate donated by ATP, constituting the first step of 2 biosynthetic pathways, one leading to arginine and/or urea and the other to pyrimidine nucleotides. The small subunit (glutamine amidotransferase) binds and cleaves glutamine to supply the large subunit with the substrate ammonia. This is Carbamoyl phosphate synthase small chain from Bacillus cereus (strain ATCC 10987 / NRS 248).